The primary structure comprises 429 residues: Putative GMP synthase [glutamine-hydrolyzing] (429 aa).

Residues 10 to 118 (TIFILDFGSQ…GYTPIHLYPC (109 aa)) enclose the Glutamine amidotransferase type-1 domain. Cysteine 87 serves as the catalytic Nucleophile. Residues 119–304 (ELFKHIVDCE…LGLSSYLLDR (186 aa)) form the GMPS ATP-PPase domain. Active-site residues include histidine 176 and glutamate 178.

In terms of assembly, homodimer.

It catalyses the reaction XMP + L-glutamine + ATP + H2O = GMP + L-glutamate + AMP + diphosphate + 2 H(+). It functions in the pathway purine metabolism; GMP biosynthesis; GMP from XMP (L-Gln route): step 1/1. In terms of biological role, catalyzes the synthesis of GMP from XMP. This chain is Putative GMP synthase [glutamine-hydrolyzing] (guaA), found in Chlamydia pneumoniae (Chlamydophila pneumoniae).